The primary structure comprises 162 residues: UPF0305 protein MmarC7_1691 (162 aa).

Belongs to the UPF0305 family.

In Methanococcus maripaludis (strain C7 / ATCC BAA-1331), this protein is UPF0305 protein MmarC7_1691.